A 105-amino-acid polypeptide reads, in one-letter code: Venom metalloprotease inhibitor (105 aa).

The signal sequence occupies residues 1–21; it reads MFRFVCVLFIALVVFCTTTSA. 5 cysteine pairs are disulfide-bonded: Cys26–Cys61, Cys35–Cys57, Cys39–Cys50, Cys43–Cys83, and Cys63–Cys77. A TIL domain is found at 26–83; that stretch reads CNRPNEEYRCGSACQTTCATLGQRCPIMNIRCNDACYCKEGYARYGDDTGMCVSISQC.

Belongs to the serine protease inhibitor-like (TIL domain-containing) family. In terms of tissue distribution, expressed by the venom gland.

The protein localises to the secreted. Its function is as follows. Inhibits metalloprotease (human MMP3), trypsin, chymotrypsin, plasmin and microbial serine protease (proteinase K). Exhibits antifibrinolytic activity by binding plasmin and inhibiting it. Does not inhibit elastase, thrombin or microbial serine protease (subtilisin A). The chain is Venom metalloprotease inhibitor from Bombus ignitus (Bumblebee).